We begin with the raw amino-acid sequence, 119 residues long: Large ribosomal subunit protein bL20 (119 aa).

Belongs to the bacterial ribosomal protein bL20 family.

In terms of biological role, binds directly to 23S ribosomal RNA and is necessary for the in vitro assembly process of the 50S ribosomal subunit. It is not involved in the protein synthesizing functions of that subunit. The sequence is that of Large ribosomal subunit protein bL20 from Geobacillus thermodenitrificans (strain NG80-2).